The following is a 101-amino-acid chain: Small ribosomal subunit protein uS14 (101 aa).

A compositionally biased stretch (basic and acidic residues) spans 1–10; it reads MAKKSSIEKN. Residues 1–24 are disordered; sequence MAKKSSIEKNNRRKRLTKNAAPKR. The span at 11 to 24 shows a compositional bias: basic residues; that stretch reads NRRKRLTKNAAPKR.

The protein belongs to the universal ribosomal protein uS14 family. Part of the 30S ribosomal subunit. Contacts proteins S3 and S10.

Binds 16S rRNA, required for the assembly of 30S particles and may also be responsible for determining the conformation of the 16S rRNA at the A site. This Rhodopseudomonas palustris (strain BisB18) protein is Small ribosomal subunit protein uS14.